The primary structure comprises 301 residues: Phosducin-like protein (301 aa).

Threonine 2 carries the N-acetylthreonine modification. The tract at residues 17–60 (YSTSEDEDSDHEDKDRGRGAPAISSTPAEAELAGEGISINTGPK) is disordered. 5 positions are modified to phosphoserine: serine 20, serine 25, serine 226, serine 293, and serine 296. The 264-residue stretch at 36 to 299 (APAISSTPAE…TCHSEDSDLE (264 aa)) folds into the Phosducin domain. The segment at 158–301 (FKQVFEIPSG…HSEDSDLEID (144 aa)) is thioredoxin fold.

Belongs to the phosducin family. In terms of assembly, forms a complex with the beta and gamma subunits of the GTP-binding protein, transducin. Interacts with the CCT chaperonin complex.

It is found in the cell projection. The protein resides in the cilium. Functionally, functions as a co-chaperone for CCT in the assembly of heterotrimeric G protein complexes, facilitates the assembly of both Gbeta-Ggamma and RGS-Gbeta5 heterodimers. Also acts as a positive regulator of hedgehog signaling and regulates ciliary function. The sequence is that of Phosducin-like protein (Pdcl) from Mus musculus (Mouse).